The chain runs to 149 residues: Macrodomain Ter protein (149 aa).

The protein belongs to the MatP family. In terms of assembly, homodimer.

The protein localises to the cytoplasm. In terms of biological role, required for spatial organization of the terminus region of the chromosome (Ter macrodomain) during the cell cycle. Prevents early segregation of duplicated Ter macrodomains during cell division. Binds specifically to matS, which is a 13 bp signature motif repeated within the Ter macrodomain. The sequence is that of Macrodomain Ter protein from Vibrio campbellii (strain ATCC BAA-1116).